Reading from the N-terminus, the 844-residue chain is Leucine--tRNA ligase (844 aa).

A 'HIGH' region motif is present at residues 39–49 (PYPSGRIHMGH). The short motif at 621–625 (KMSKS) is the 'KMSKS' region element. Residue lysine 624 coordinates ATP.

Belongs to the class-I aminoacyl-tRNA synthetase family.

The protein localises to the cytoplasm. It catalyses the reaction tRNA(Leu) + L-leucine + ATP = L-leucyl-tRNA(Leu) + AMP + diphosphate. The sequence is that of Leucine--tRNA ligase from Paracoccus denitrificans (strain Pd 1222).